The chain runs to 215 residues: Phosphatidylserine decarboxylase proenzyme (215 aa).

S185 (schiff-base intermediate with substrate; via pyruvic acid) is an active-site residue. Residue S185 is modified to Pyruvic acid (Ser); by autocatalysis.

The protein belongs to the phosphatidylserine decarboxylase family. PSD-A subfamily. As to quaternary structure, heterodimer of a large membrane-associated beta subunit and a small pyruvoyl-containing alpha subunit. The cofactor is pyruvate. Is synthesized initially as an inactive proenzyme. Formation of the active enzyme involves a self-maturation process in which the active site pyruvoyl group is generated from an internal serine residue via an autocatalytic post-translational modification. Two non-identical subunits are generated from the proenzyme in this reaction, and the pyruvate is formed at the N-terminus of the alpha chain, which is derived from the carboxyl end of the proenzyme. The post-translation cleavage follows an unusual pathway, termed non-hydrolytic serinolysis, in which the side chain hydroxyl group of the serine supplies its oxygen atom to form the C-terminus of the beta chain, while the remainder of the serine residue undergoes an oxidative deamination to produce ammonia and the pyruvoyl prosthetic group on the alpha chain.

It is found in the cell membrane. It catalyses the reaction a 1,2-diacyl-sn-glycero-3-phospho-L-serine + H(+) = a 1,2-diacyl-sn-glycero-3-phosphoethanolamine + CO2. The protein operates within phospholipid metabolism; phosphatidylethanolamine biosynthesis; phosphatidylethanolamine from CDP-diacylglycerol: step 2/2. Functionally, catalyzes the formation of phosphatidylethanolamine (PtdEtn) from phosphatidylserine (PtdSer). The protein is Phosphatidylserine decarboxylase proenzyme of Streptomyces avermitilis (strain ATCC 31267 / DSM 46492 / JCM 5070 / NBRC 14893 / NCIMB 12804 / NRRL 8165 / MA-4680).